Reading from the N-terminus, the 129-residue chain is Mitochondrial pyruvate carrier 2 (129 aa).

At 2-22 the chain is on the mitochondrial matrix side; the sequence is STSSVRFAFRRFWQSETGPKT. The chain crosses the membrane as a helical span at residues 23–39; that stretch reads VHFWAPTLKWGLVFAGF. The Mitochondrial intermembrane portion of the chain corresponds to 40-54; the sequence is SDMKRPVEKISGAQN. The chain crosses the membrane as a helical span at residues 55–71; it reads LSLLSTALIWTRWSFVI. Residues 72 to 74 are Mitochondrial matrix-facing; sequence KPR. The helical transmembrane segment at 75 to 91 threads the bilayer; sequence NILLASVNSFLCLTAGY. The Mitochondrial intermembrane portion of the chain corresponds to 92 to 129; it reads QLGRIANYRIRNGDSISQLCSYILSGADESKKEITTGR.

Belongs to the mitochondrial pyruvate carrier (MPC) (TC 2.A.105) family. The functional 150 kDa pyruvate import complex is a heteromer of MPC1 and either MPC2 or MPC3.

The protein resides in the mitochondrion. Its subcellular location is the mitochondrion inner membrane. It catalyses the reaction pyruvate(out) + H(+)(out) = pyruvate(in) + H(+)(in). Functionally, mediates the uptake of pyruvate into mitochondria. The polypeptide is Mitochondrial pyruvate carrier 2 (Saccharomyces cerevisiae (strain ATCC 204508 / S288c) (Baker's yeast)).